The sequence spans 381 residues: Beta-lactamase CMY-2 (381 aa).

The first 20 residues, 1–20 (MMKKSLCCALLLTASFSTFA), serve as a signal peptide directing secretion. The Acyl-ester intermediate role is filled by Ser-84. A beta-lactam-binding residues include Ser-84, Gln-140, Tyr-170, and Asn-172.

Belongs to the class-C beta-lactamase family.

The catalysed reaction is a beta-lactam + H2O = a substituted beta-amino acid. Inhibited by the beta-lactamase-blocking agents sulbactam, tazobactam, avibactam and 3-aminophenylboronic acid (APB). Its function is as follows. Class C beta-lactamase which confers resistance to penicillins and cephalosporins. Has nitrocefin-, cefoxitin- and cefoperazone-hydrolyzing activities. The sequence is that of Beta-lactamase CMY-2 from Klebsiella pneumoniae.